Here is a 948-residue protein sequence, read N- to C-terminus: MSDYKNTLNLPETGFPMRGDLAKREPGMLQHWYEQDLYGIIRNAKQGKKSFILHDGPPYANGSIHIGHSVNKILKDIIIKSKGLSGYDSPYIPGWDCHGLPIELKVEQLIGKPGEKYSAAEFREQCRAYAAEQVAGQKADFIRLGVLGDWEHPYLTMDYGTEANIIRALARIVDNGHLMKGAKPVHWCPDCGSSLAEAEVEYYDKVSPSIDVRFAAVDKAQVLAKFGVSEAKGDVNVVIWTTTPWTLPANRAVALHPELEYQLVQVEGECLILAADLVESVMKRAGIDYWQVLGSCKGEALELLHFCHPFMNFDVPIIMGDHVTLDAGTGAVHTAPGHGPDDYVVGQKYGLEIANPVGSNGCYLPGTHPVLDGLFVFKANDIVIDLLKDSGALLHVEKLTHSYPCCWRHKSPIIFRATPQWFISMDRQGLRSQSLAEIDRIERQGLDEQNLSGWIPAWGKARIESMVANRPDWCISRQRTWGVPMAMLVHKETQELHPRTTELMEMVAKRVEQAGIQAWWDLDIRDLLGDEADQYEKVPDTLDVWFDSGSTSYSVVDARPEFNGHSPDMYLEGSDQHRGWFMSSLMISVAMKGKAPYRQVLTHGFTVDGQGRKMSKSVGNVVSPQQVMNKLGGDILRLWVASTDYTSEMAVSDEILKRSADAYRRIRNTARFLLANLNGFDPCKDMVKPEDMVVLDRWAVGCAKQAQDEIIAAYENYDFHEVVQRLMQFCSVEMGSFYLDIIKDRQYTAKADSVARRSCQTALYHIAEALVRWMAPILSFTADEVWGYLPGDRAQFVFTEEWYQGLFGLDAAEQMNDAFWAELLKVRGEVNRVIEQARNDKKVGGSLEAAITLYADEALATQLDSLQDELRFVLITSAARVQPLVQATADAVASELAGLKVGLGKADGSKCPRCWHYSTAIGQDAAHPQLCPRCVTNVAGQGEERKFA.

The short motif at 58–68 (PYANGSIHIGH) is the 'HIGH' region element. Residue Glu-572 coordinates L-isoleucyl-5'-AMP. Residues 613–617 (KMSKS) carry the 'KMSKS' region motif. Lys-616 contacts ATP. Positions 911, 914, 931, and 934 each coordinate Zn(2+).

The protein belongs to the class-I aminoacyl-tRNA synthetase family. IleS type 1 subfamily. As to quaternary structure, monomer. Requires Zn(2+) as cofactor.

It localises to the cytoplasm. It catalyses the reaction tRNA(Ile) + L-isoleucine + ATP = L-isoleucyl-tRNA(Ile) + AMP + diphosphate. Functionally, catalyzes the attachment of isoleucine to tRNA(Ile). As IleRS can inadvertently accommodate and process structurally similar amino acids such as valine, to avoid such errors it has two additional distinct tRNA(Ile)-dependent editing activities. One activity is designated as 'pretransfer' editing and involves the hydrolysis of activated Val-AMP. The other activity is designated 'posttransfer' editing and involves deacylation of mischarged Val-tRNA(Ile). The chain is Isoleucine--tRNA ligase from Edwardsiella ictaluri (strain 93-146).